The following is a 42-amino-acid chain: uncharacterized protein (42 aa).

Residues 15–35 traverse the membrane as a helical segment; sequence INVCLSFFFLFYFIFVLFFAA.

It is found in the membrane. This is an uncharacterized protein from Dictyostelium discoideum (Social amoeba).